The following is a 249-amino-acid chain: Aspartate/glutamate leucyltransferase (249 aa).

The protein belongs to the R-transferase family. Bpt subfamily.

The protein localises to the cytoplasm. It catalyses the reaction N-terminal L-glutamyl-[protein] + L-leucyl-tRNA(Leu) = N-terminal L-leucyl-L-glutamyl-[protein] + tRNA(Leu) + H(+). It carries out the reaction N-terminal L-aspartyl-[protein] + L-leucyl-tRNA(Leu) = N-terminal L-leucyl-L-aspartyl-[protein] + tRNA(Leu) + H(+). Functions in the N-end rule pathway of protein degradation where it conjugates Leu from its aminoacyl-tRNA to the N-termini of proteins containing an N-terminal aspartate or glutamate. The chain is Aspartate/glutamate leucyltransferase from Brucella canis (strain ATCC 23365 / NCTC 10854 / RM-666).